A 625-amino-acid chain; its full sequence is Inactive glucose-6-phosphate 1-dehydrogenase 4, chloroplastic (625 aa).

A chloroplast-targeting transit peptide spans 1–49; the sequence is MSLSSCLLPFSQSATAPSSSVCSCHLAASFSNFPVSSRDYSFSRSGSLV. NADP(+)-binding positions include 160–167 and R194; that span reads GATGELAR. Cysteines 212 and 220 form a disulfide. K297 is a binding site for NADP(+). D-glucose 6-phosphate contacts are provided by residues K297, 327–331, E365, and D382; that span reads HMLGR. H387 serves as the catalytic Proton acceptor. NADP(+)-binding residues include R471, R480, R513, and R606.

Belongs to the glucose-6-phosphate dehydrogenase family. Forms homodimer. Interacts with G6PD1. Expressed in leaves, stems and buds.

It localises to the plastid. Its subcellular location is the chloroplast stroma. Seems to be a catalytically inactive enzyme. This chain is Inactive glucose-6-phosphate 1-dehydrogenase 4, chloroplastic, found in Arabidopsis thaliana (Mouse-ear cress).